Reading from the N-terminus, the 162-residue chain is Proepiregulin (162 aa).

Positions 1 to 22 (METFPAAWVLALLCLGSHLLQA) are cleaved as a signal peptide. Positions 23–55 (VISTTVIPSCIPEESEDNCTALVQMEDDPRVAQ) are excised as a propeptide. Asn-40 is a glycosylation site (N-linked (GlcNAc...) asparagine). Positions 57–97 (LITKCSSDMDGYCLHGHCIYLVDMSEKYCRCEVGYTGLRCE) constitute an EGF-like domain. 3 disulfide bridges follow: Cys-61–Cys-74, Cys-69–Cys-85, and Cys-87–Cys-96. Positions 102 to 162 (TVHQPLSREY…TSGGPGLPQV (61 aa)) are cleaved as a propeptide — removed in mature form. Residues 113–133 (ALTVILVFLFLIVTAGSMYYF) traverse the membrane as a helical segment.

As to quaternary structure, interacts with EGFR and ERBB4.

Its subcellular location is the secreted. The protein resides in the extracellular space. It localises to the cell membrane. Functionally, ligand of the EGF receptor/EGFR and ERBB4. Stimulates EGFR and ERBB4 tyrosine phosphorylation. Contributes to inflammation, wound healing, tissue repair, and oocyte maturation by regulating angiogenesis and vascular remodeling and by stimulating cell proliferation. This is Proepiregulin (Ereg) from Rattus norvegicus (Rat).